Reading from the N-terminus, the 344-residue chain is Phosphate acyltransferase (344 aa).

It belongs to the PlsX family. In terms of assembly, homodimer. Probably interacts with PlsY.

The protein localises to the cytoplasm. The catalysed reaction is a fatty acyl-[ACP] + phosphate = an acyl phosphate + holo-[ACP]. Its pathway is lipid metabolism; phospholipid metabolism. Functionally, catalyzes the reversible formation of acyl-phosphate (acyl-PO(4)) from acyl-[acyl-carrier-protein] (acyl-ACP). This enzyme utilizes acyl-ACP as fatty acyl donor, but not acyl-CoA. The chain is Phosphate acyltransferase from Enterobacter sp. (strain 638).